The chain runs to 495 residues: DDB1- and CUL4-associated factor 4 (495 aa).

Positions 1-17 (MNKSRWQSRRRHGRRSH) are enriched in basic residues. The tract at residues 1 to 66 (MNKSRWQSRR…TAGTSSVPEL (66 aa)) is disordered. The segment covering 24–34 (RLRDSEDRSDS) has biased composition (basic and acidic residues). Low complexity predominate over residues 51-62 (PSTSSGTAGTSS). WD repeat units follow at residues 368-407 (FHDS…CVRQ) and 410-451 (GHVN…LLRT).

Interacts with DDB1 and CUL4A.

It functions in the pathway protein modification; protein ubiquitination. Its function is as follows. May function as a substrate receptor for CUL4-DDB1 E3 ubiquitin-protein ligase complex. The polypeptide is DDB1- and CUL4-associated factor 4 (DCAF4) (Homo sapiens (Human)).